Here is a 167-residue protein sequence, read N- to C-terminus: MSKFIDPEKLEIEDRVVAINRVTKVVKGGRRLRFAALVVVGDKNGHVGFGTGKAQEVPEAIRKAVETARKSLIEVPIVGTTLPHEAVGVYGGGRILMKPALEGSGVAAGGAVRAVMELAGIDDVTSKRLGSNTAVNVVRATFEGLKSMRNAEEVAALRGVSVDHLAE.

The region spanning isoleucine 12–valine 75 is the S5 DRBM domain.

The protein belongs to the universal ribosomal protein uS5 family. Part of the 30S ribosomal subunit. Contacts proteins S4 and S8.

With S4 and S12 plays an important role in translational accuracy. Functionally, located at the back of the 30S subunit body where it stabilizes the conformation of the head with respect to the body. The protein is Small ribosomal subunit protein uS5 of Pediococcus pentosaceus (strain ATCC 25745 / CCUG 21536 / LMG 10740 / 183-1w).